Here is a 472-residue protein sequence, read N- to C-terminus: Methylenetetrahydrofolate--tRNA-(uracil-5-)-methyltransferase TrmFO (472 aa).

An FAD-binding site is contributed by 15-20 (GGGLAG).

Belongs to the MnmG family. TrmFO subfamily. FAD is required as a cofactor.

The protein localises to the cytoplasm. It catalyses the reaction uridine(54) in tRNA + (6R)-5,10-methylene-5,6,7,8-tetrahydrofolate + NADH + H(+) = 5-methyluridine(54) in tRNA + (6S)-5,6,7,8-tetrahydrofolate + NAD(+). It carries out the reaction uridine(54) in tRNA + (6R)-5,10-methylene-5,6,7,8-tetrahydrofolate + NADPH + H(+) = 5-methyluridine(54) in tRNA + (6S)-5,6,7,8-tetrahydrofolate + NADP(+). Catalyzes the folate-dependent formation of 5-methyl-uridine at position 54 (M-5-U54) in all tRNAs. The polypeptide is Methylenetetrahydrofolate--tRNA-(uracil-5-)-methyltransferase TrmFO (Rhizobium meliloti (strain 1021) (Ensifer meliloti)).